The sequence spans 420 residues: Tyrosine--tRNA ligase (420 aa).

Residue Tyr39 participates in L-tyrosine binding. The short motif at 44–53 is the 'HIGH' region element; sequence CTAPSLHIGS. L-tyrosine contacts are provided by Tyr176 and Gln180. The 'KMSKS' region signature appears at 236-240; it reads KMGKT. An ATP-binding site is contributed by Lys239. In terms of domain architecture, S4 RNA-binding spans 349-414; it reads IPLIDLLYDT…AGKKRHIKIL (66 aa).

It belongs to the class-I aminoacyl-tRNA synthetase family. TyrS type 1 subfamily. Homodimer.

The protein resides in the cytoplasm. It catalyses the reaction tRNA(Tyr) + L-tyrosine + ATP = L-tyrosyl-tRNA(Tyr) + AMP + diphosphate + H(+). In terms of biological role, catalyzes the attachment of tyrosine to tRNA(Tyr) in a two-step reaction: tyrosine is first activated by ATP to form Tyr-AMP and then transferred to the acceptor end of tRNA(Tyr). The protein is Tyrosine--tRNA ligase of Wolbachia pipientis subsp. Culex pipiens (strain wPip).